We begin with the raw amino-acid sequence, 142 residues long: Transcriptional regulator MraZ (142 aa).

SpoVT-AbrB domains lie at 5–51 (ASSL…PRPV) and 77–120 (ASDV…DAAR).

The protein belongs to the MraZ family. In terms of assembly, forms oligomers.

The protein resides in the cytoplasm. Its subcellular location is the nucleoid. This is Transcriptional regulator MraZ from Herminiimonas arsenicoxydans.